We begin with the raw amino-acid sequence, 2193 residues long: MGSQVSTQRSGSHENSNSATEGSTINYTTINYYKDSYAATAGKQSLKQDPDKFANPVKDIFTEMAAPLKSPSAEACGYSDRVAQLTIGNSTITTQEAANIIVGYGEWPSYCSDSDATAVDKPTRPDVSVNRFYTLDTKLWEKSSKGWYWKFPDVLTETGVFGQNAQFHYLYRSGFCIHVQCNASKFHQGALLVAVLPEYVIGTVAGGTGTEDSHPPYKQTQPGADGFELQHPYVLDAGIPISQLTVCPHQWINLRTNNCATIIVPYINALPFDSALNHCNFGLLVVPISPLDYDQGATPVIPITITLAPMCSEFAGLRQAVTQGFPTELKPGTNQFLTTDDGVSAPILPNFHPTPCIHIPGEVRNLLELCQVETILEVNNVPTNATSLMERLRFPVSAQAGKGELCAVFRADPGRNGPWQSTLLGQLCGYYTQWSGSLEVTFMFTGSFMATGKMLIAYTPPGGPLPKDRATAMLGTHVIWDFGLQSSVTLVIPWISNTHYRAHARDGVFDYYTTGLVSIWYQTNYVVPIGAPNTAYIIALAAAQKNFTMKLCKDASDILQTGTIQGDRVADVIESSIGDSVSRALTQALPAPTGQNTQVSSHRLDTGKVPALQAAEIGASSNASDESMIETRCVLNSHSTAETTLDSFFSRAGLVGEIDLPLEGTTNPNGYANWDIDITGYAQMRRKVELFTYMRFDAEFTFVACTPTGEVVPQLLQYMFVPPGAPKPDSRESLAWQTATNPSVFVKLSDPPAQVSVPFMSPASAYQWFYDGYPTFGEHKQEKDLEYGACPNNMMGTFSVRTVGTSKSKYPLVVRIYMRMKHVRAWIPRPMRNQNYLFKANPNYAGNSIKPTGTSRTAITTLGKFGQQSGAIYVGNFRVVNRHLATHNDWANLVWEDSSRDLLVSSTTAQGCDTIARCNCQTGVYYCNSRRKHYPVSFSKPSLIYVEASEYYPARYQSHLMLAQGHSEPGDCGGILRCQHGVVGIVSTGGNGLVGFADVRDLLWLDEEAMEQGVSDYIKGLGDAFGTGFTDAVSREVEALKSYLIGSEGAVEKILKNLIKLISALVIVIRSDYDMVTLTATLALIGCHGSPWAWIKAKTASILGIPIAQKQSASWLKKFNDMANAAKGLEWVSNKISKFIDWLKEKIVPAAKEKVEFLNNLKQLPLLENQISNLEQSAASQEDLEVMFGNVSYLAHFCRKFQPLYATEAKRVYALEKRMNNYMQFKSKHRIEPVCLIIRGSPGTGKSLATGIIARAIADKYHSSVYSLPPDPDHFDGYKQQVVTVMDDLCQNPDGKDMSLFCQMVSTVDFIPPMASLEEKGVSFTSKFVIASTNATNIIVPTVSDSDAIRRRFYMDCDIEVTDSYKTDLGRLDAGRAAKLCSENNTANFKRCSPLVCGKAIQLRDRKSKVRYSVDTVVSELIREYSNRSAIGNTIEALFQGPPKFRPIRIGLEEKPAPDAISDLLASVDSEEVRQYCRDQGWIIPETPTNVERHLNRAVLVMQSIATVVAVVSLVYVIYKLFAGFQGAYSGAPKQVLKKPALRTATVQGPSLDFALSLLRRNVRQVQTDQGHFTMLGVRDRLAVLPRHSQPGKTIWIEHKLVNVLDAVELVDEQGVNLELTLITLDTNEKFRDITKFIPENISTASDATLVINTEHMPSMFVPVGDVVQYGFLNLSGKPTHRTMMYNFPTKAGQCGGVVTSVGKVIGIHIGGNGRQGFCAGLKRSYFASEQGEIQWVKPNKETGRLNINGPTRTKLEPSVFHDVFEGSKEPAVLHSKDPRLEVDFEQALFSKYVGNTLHVPDEYIREAALHYANQLKQLDIDTTQMSMEEACYGTDNLEAIDLHTSAGYPYSALGIKKRDILDPTTRDVSKMKFYMDKYGLDLPYSTYVKDELRSIDKIKKGKSRLIEASSLNDSVYLRMAFGHLYETFHANPGTVTGSAVGCNPDVFWSKLPILLPGSLFAFDYSGYDASLSPVWFRALELVLREIGYSEEAVSLIEGINHTHHVYRNKTYCVLGGMPSGCSGTSIFNTMINNIIIRALLIKTFKGIDLDELNMVAYGDDVLASYPFPIDCLELAKTGKEYGLTMTPADKSPCFNEVNWENATFLKRGFLPDEQFPFLIHPTMPMKEIHESIRWTKDARNTQDHVRSLCLLAWHNGKQEYEKFVSSIRSVPIGKALAIPNYENLRRNWLELF.

A disordered region spans residues 1–22 (MGSQVSTQRSGSHENSNSATEG). Residue Gly-2 is the site of N-myristoyl glycine; by host attachment. The Cytoplasmic portion of the chain corresponds to 2-1503 (GSQVSTQRSG…HLNRAVLVMQ (1502 aa)). 2 amphipathic alpha-helix regions span residues 566 to 588 (GDRVADVIESSIGDSVSRALTQA) and 568 to 588 (RVADVIESSIGDSVSRALTQA). Catalysis depends on for protease 2A activity residues His-883 and Asp-901. The Zn(2+) site is built by Cys-918 and Cys-920. The active-site For protease 2A activity is the Cys-972. The Zn(2+) site is built by Cys-978 and His-980. Residues 1112-1184 (SASWLKKFND…EQSAASQEDL (73 aa)) are membrane-binding. The interval 1112 to 1250 (SASWLKKFND…SPGTGKSLAT (139 aa)) is oligomerization. Residues 1133–1137 (SNKIS) are RNA-binding. One can recognise an SF3 helicase domain in the interval 1216–1374 (EKRMNNYMQF…YKTDLGRLDA (159 aa)). 1240–1247 (GSPGTGKS) contacts ATP. Residues Cys-1381, Cys-1392, Ser-1393, and Cys-1397 each coordinate Zn(2+). The C4-type; degenerate zinc-finger motif lies at 1381–1397 (CSENNTANFKRCSPLVC). The tract at residues 1424 to 1431 (EYSNRSAI) is RNA-binding. The oligomerization stretch occupies residues 1435–1440 (IEALFQ). Residues 1504 to 1519 (SIATVVAVVSLVYVIY) lie within the membrane without spanning it. Residues 1520–2193 (KLFAGFQGAY…NLRRNWLELF (674 aa)) lie on the Cytoplasmic side of the membrane. Tyr-1529 bears the O-(5'-phospho-RNA)-tyrosine mark. Positions 1549–1727 (GPSLDFALSL…FCAGLKRSYF (179 aa)) constitute a Peptidase C3 domain. Catalysis depends on for protease 3C activity residues His-1588, Glu-1619, and Cys-1695. Residues 1958-2073 (GSLFAFDYSG…ASYPFPIDCL (116 aa)) enclose the RdRp catalytic domain. Residues Asp-1964 and Asp-2060 each coordinate Mg(2+).

Belongs to the picornaviruses polyprotein family. Interacts with capsid protein VP1 and capsid protein VP3 to form heterotrimeric protomers. In terms of assembly, interacts with capsid protein VP0, and capsid protein VP3 to form heterotrimeric protomers. Five protomers subsequently associate to form pentamers which serve as building blocks for the capsid. Interacts with capsid protein VP2, capsid protein VP3 and capsid protein VP4 following cleavage of capsid protein VP0. Interacts with host SCARB2. Interacts with host ARF6; this interaction mediates viral endocytosis. As to quaternary structure, interacts with capsid protein VP1 and capsid protein VP3 in the mature capsid. Interacts with host SCARB2. Interacts with capsid protein VP0 and capsid protein VP1 to form heterotrimeric protomers. Five protomers subsequently associate to form pentamers which serve as building blocks for the capsid. Interacts with capsid protein VP4 in the mature capsid. Interacts with protein 2C; this interaction may be important for virion morphogenesis. In terms of assembly, interacts with capsid protein VP1 and capsid protein VP3. As to quaternary structure, homodimer. Interacts with host BAX; this interaction activates the mitochondrial apoptotic pathway. Interacts with host ILF2. In terms of assembly, homohexamer; forms a hexameric ring structure with 6-fold symmetry characteristic of AAA+ ATPases. Interacts (via N-terminus) with host RTN3 (via reticulon domain); this interaction is important for viral replication. Interacts with capsid protein VP3; this interaction may be important for virion morphogenesis. As to quaternary structure, interacts with protein 3CD. Homodimer. Interacts with host GBF1. Interacts (via GOLD domain) with host ACBD3 (via GOLD domain); this interaction allows the formation of a viral protein 3A/ACBD3 heterotetramer with a 2:2 stoichiometry, which will stimulate the recruitment of host PI4KB in order to synthesize PI4P at the viral RNA replication sites. In terms of assembly, interacts with RNA-directed RNA polymerase. As to quaternary structure, interacts with host IFIH1/MDA5; this interaction inhibits host IFIH1. Interacts with host RIGI. Interacts with protein 3AB and with RNA-directed RNA polymerase. In terms of assembly, interacts with Viral protein genome-linked and with protein 3CD. Requires Mg(2+) as cofactor. Specific enzymatic cleavages in vivo by the viral proteases yield processing intermediates and the mature proteins. In terms of processing, myristoylation is required for the formation of pentamers during virus assembly. Further assembly of 12 pentamers and a molecule of genomic RNA generates the provirion. Post-translationally, during virion maturation, immature virions are rendered infectious following cleavage of VP0 into VP4 and VP2. This maturation seems to be an autocatalytic event triggered by the presence of RNA in the capsid and it is followed by a conformational change infectious virion. Myristoylation is required during RNA encapsidation and formation of the mature virus particle. In terms of processing, VPg is uridylylated by the polymerase into VPg-pUpU. This acts as a nucleotide-peptide primer for the genomic RNA replication.

The protein localises to the virion. It localises to the host cytoplasm. Its subcellular location is the host cytoplasmic vesicle membrane. It is found in the host nucleus. The enzyme catalyses a ribonucleoside 5'-triphosphate + H2O = a ribonucleoside 5'-diphosphate + phosphate + H(+). It catalyses the reaction Selective cleavage of Tyr-|-Gly bond in the picornavirus polyprotein.. It carries out the reaction RNA(n) + a ribonucleoside 5'-triphosphate = RNA(n+1) + diphosphate. The catalysed reaction is Selective cleavage of Gln-|-Gly bond in the poliovirus polyprotein. In other picornavirus reactions Glu may be substituted for Gln, and Ser or Thr for Gly.. Replication or transcription is subject to high level of random mutations by the nucleotide analog ribavirin. In terms of biological role, forms an icosahedral capsid of pseudo T=3 symmetry with capsid proteins VP2 and VP3. The capsid is 300 Angstroms in diameter, composed of 60 copies of each capsid protein and enclosing the viral positive strand RNA genome. Capsid protein VP1 mainly forms the vertices of the capsid. Capsid protein VP1, together with VP2, interacts with host cell receptor SCARB2 to provide virion attachment to target host cells. This attachment induces virion internalization. This attachment induces virion internalization. After binding to its receptor, the capsid undergoes conformational changes. Capsid protein VP1 N-terminus (that contains an amphipathic alpha-helix) and capsid protein VP4 are externalized. Together, they shape a pore in the host membrane through which viral genome is translocated to host cell cytoplasm. Functionally, forms an icosahedral capsid of pseudo T=3 symmetry with capsid proteins VP2 and VP3. The capsid is 300 Angstroms in diameter, composed of 60 copies of each capsid protein and enclosing the viral positive strand RNA genome. Capsid protein VP2, together with VP1, interacts with host cell receptor SCARB2 to provide virion attachment to target host cells. Its function is as follows. Forms an icosahedral capsid of pseudo T=3 symmetry with capsid proteins VP2 and VP3. The capsid is 300 Angstroms in diameter, composed of 60 copies of each capsid protein and enclosing the viral positive strand RNA genome. Lies on the inner surface of the capsid shell. After binding to the host receptor, the capsid undergoes conformational changes. Capsid protein VP4 is released, Capsid protein VP1 N-terminus is externalized, and together, they shape a pore in the host membrane through which the viral genome is translocated into the host cell cytoplasm. In terms of biological role, component of immature procapsids, which is cleaved into capsid proteins VP4 and VP2 after maturation. Allows the capsid to remain inactive before the maturation step. Functionally, cysteine protease that cleaves viral polyprotein and specific host proteins. It is responsible for the autocatalytic cleavage between the P1 and P2 regions, which is the first cleavage occurring in the polyprotein. Also cleaves the host translation initiation factor EIF4G1, in order to shut down the capped cellular mRNA translation. Inhibits the host nucleus-cytoplasm protein and RNA trafficking by cleaving host members of the nuclear pores. Counteracts stress granule formation probably by antagonizing its assembly or promoting its dissassembly. Cleaves and inhibits host IFIH1/MDA5, thereby inhibiting the type-I IFN production and the establishment of the antiviral state. Cleaves and inhibits host MAVS, thereby inhibiting the type-I IFN production and the establishment of the antiviral state. Its function is as follows. Plays an essential role in the virus replication cycle by acting as a viroporin. Creates a pore in the host endoplasmic reticulum and as a consequence releases Ca2+ in the cytoplasm of infected cell. In turn, high levels of cytoplasmic calcium may trigger membrane trafficking and transport of viral ER-associated proteins to viroplasms, sites of viral genome replication. Also activates the mitochondrial apoptotic pathway by activating host BAX. Induces and associates with structural rearrangements of intracellular membranes. Displays RNA-binding, nucleotide binding and NTPase activities. May play a role in virion morphogenesis and viral RNA encapsidation by interacting with the capsid protein VP3. In terms of biological role, localizes the viral replication complex to the surface of membranous vesicles. Together with protein 3CD binds the Cis-Active RNA Element (CRE) which is involved in RNA synthesis initiation. Acts as a cofactor to stimulate the activity of 3D polymerase, maybe through a nucleid acid chaperone activity. Functionally, localizes the viral replication complex to the surface of membranous vesicles. It inhibits host cell endoplasmic reticulum-to-Golgi apparatus transport and causes the disassembly of the Golgi complex, possibly through GBF1 interaction. This would result in depletion of MHC, trail receptors and IFN receptors at the host cell surface. Plays an essential role in viral RNA replication by recruiting ACBD3 and PI4KB at the viral replication sites, thereby allowing the formation of the rearranged membranous structures where viral replication takes place. Its function is as follows. Acts as a primer for viral RNA replication and remains covalently bound to viral genomic RNA. VPg is uridylylated prior to priming replication into VPg-pUpU. The oriI viral genomic sequence may act as a template for this. The VPg-pUpU is then used as primer on the genomic RNA poly(A) by the RNA-dependent RNA polymerase to replicate the viral genome. During genome replication, the VPg-RNA linkage is removed by the host TDP2, thereby accelerating replication. During the late stage of the replication cycle, host TDP2 is excluded from sites of viral RNA synthesis and encapsidation, allowing for the generation of progeny virions. Involved in the viral replication complex and viral polypeptide maturation. It exhibits protease activity with a specificity and catalytic efficiency that is different from protease 3C. Protein 3CD lacks polymerase activity. Protein 3CD binds to the 5'UTR of the viral genome. In terms of biological role, major viral protease that mediates proteolytic processing of the polyprotein. Cleaves host EIF5B, contributing to host translation shutoff. Also cleaves host PABPC1, contributing to host translation shutoff. Disassembles host cytoplasmic stress granules by cleaving host G3BP1, although this effect is less prononced than the inhibition induced by protease 2A. Cleaves host RIGI and thus contributes to the inhibition of type I interferon production. Cleaves host IRF7 and thus contributes to the inhibition of type I interferon production. Cleaves host HNRNPA1 thereby increasing the translation of apoptosis protease activating factor APAF1, leading to apoptosis of the host cell. Cleaves host NLRP1, triggers host N-glycine-mediated degradation of the autoinhibitory NLRP1 N-terminal fragment. Functionally, replicates the viral genomic RNA on the surface of intracellular membranes. May form linear arrays of subunits that propagate along a strong head-to-tail interaction called interface-I. Covalently attaches UMP to a tyrosine of VPg, which is used to prime RNA synthesis. The positive stranded RNA genome is first replicated at virus induced membranous vesicles, creating a dsRNA genomic replication form. This dsRNA is then used as template to synthesize positive stranded RNA genomes. ss(+)RNA genomes are either translated, replicated or encapsidated. The protein is Genome polyprotein of Homo sapiens (Human).